The chain runs to 379 residues: UDP-4-amino-4-deoxy-L-arabinose--oxoglutarate aminotransferase (379 aa).

Lysine 182 carries the N6-(pyridoxal phosphate)lysine modification.

Belongs to the DegT/DnrJ/EryC1 family. ArnB subfamily. As to quaternary structure, homodimer. Pyridoxal 5'-phosphate serves as cofactor.

The catalysed reaction is UDP-4-amino-4-deoxy-beta-L-arabinose + 2-oxoglutarate = UDP-beta-L-threo-pentopyranos-4-ulose + L-glutamate. It participates in nucleotide-sugar biosynthesis; UDP-4-deoxy-4-formamido-beta-L-arabinose biosynthesis; UDP-4-deoxy-4-formamido-beta-L-arabinose from UDP-alpha-D-glucuronate: step 2/3. The protein operates within bacterial outer membrane biogenesis; lipopolysaccharide biosynthesis. Its function is as follows. Catalyzes the conversion of UDP-4-keto-arabinose (UDP-Ara4O) to UDP-4-amino-4-deoxy-L-arabinose (UDP-L-Ara4N). The modified arabinose is attached to lipid A and is required for resistance to polymyxin and cationic antimicrobial peptides. The sequence is that of UDP-4-amino-4-deoxy-L-arabinose--oxoglutarate aminotransferase from Escherichia coli O157:H7.